The sequence spans 976 residues: Vacuolar membrane protease (976 aa).

Residues 1–15 lie on the Cytoplasmic side of the membrane; sequence MKLKSVFRSVLKYRK. The chain crosses the membrane as a helical span at residues 16 to 36; the sequence is TNLSLLLLITYSIITLLYIFD. The Vacuolar portion of the chain corresponds to 37-359; sequence HERYKLNLPK…KFFVISAKTL (323 aa). 2 N-linked (GlcNAc...) asparagine glycosylation sites follow: asparagine 96 and asparagine 121. Residues histidine 156 and aspartate 168 each coordinate Zn(2+). N-linked (GlcNAc...) asparagine glycosylation occurs at asparagine 189. Glutamate 200 functions as the Proton acceptor in the catalytic mechanism. Position 201 (glutamate 201) interacts with Zn(2+). N-linked (GlcNAc...) asparagine glycans are attached at residues asparagine 212 and asparagine 217. Zn(2+) contacts are provided by glutamate 226 and histidine 300. The chain crosses the membrane as a helical span at residues 360-380; it reads FYWNCIFLLVSPVVAIGLYLI. The Cytoplasmic portion of the chain corresponds to 381-392; that stretch reads SRDRMTWKSHSW. A helical membrane pass occupies residues 393-412; the sequence is LSWTRFPLSLAAGIIVQKLF. The Vacuolar segment spans residues 413–428; it reads SNDIIRSNPLTFSRNY. The helical transmembrane segment at 429–449 threads the bilayer; sequence FWPISAFFTQVIFTSYVLINC. At 450-461 the chain is on the cytoplasmic side; that stretch reads SNFFFPCADMKS. The chain crosses the membrane as a helical span at residues 462-482; the sequence is LSIIELFIILWTILLFTSKLL. The Vacuolar portion of the chain corresponds to 483–496; the sequence is YSSDYRYTGLYPLS. Residues 497-517 traverse the membrane as a helical segment; the sequence is IFFLLSTIAAILRLLALALGM. Topologically, residues 518–627 are cytoplasmic; the sequence is RTRKRLGREC…NSLKLEYTDY (110 aa). Residues 528–610 are disordered; sequence RDHHSNYSSH…PLLKGSNSME (83 aa). Polar residues predominate over residues 549-558; it reads NLEQPQDQFT. A compositionally biased stretch (low complexity) spans 559–570; sequence SSQDDQASIQDD. The segment covering 582 to 601 has biased composition (basic and acidic residues); the sequence is NVDEDHGMDSSSQQHDERVP. The helical transmembrane segment at 628–648 threads the bilayer; sequence AWIIQFLLIVPIPSFILFNSV. Over 649 to 668 the chain is Vacuolar; it reads DVIMDALNHTVQEGSKATFD. Asparagine 656 is a glycosylation site (N-linked (GlcNAc...) asparagine). Residues 669 to 689 form a helical membrane-spanning segment; sequence VLRFGMVGSILMALPILPFFY. Residues 690–692 are Cytoplasmic-facing; it reads KVN. The chain crosses the membrane as a helical span at residues 693–713; sequence YITISLTALLFLISASKTLLV. The Vacuolar portion of the chain corresponds to 714–976; the sequence is HPFTNSNPLK…LVIVKDAIIL (263 aa). 5 N-linked (GlcNAc...) asparagine glycosylation sites follow: asparagine 768, asparagine 796, asparagine 811, asparagine 866, and asparagine 937.

It belongs to the peptidase M28 family. Zn(2+) serves as cofactor.

Its subcellular location is the vacuole membrane. Functionally, may be involved in vacuolar sorting and osmoregulation. The sequence is that of Vacuolar membrane protease from Saccharomyces cerevisiae (strain RM11-1a) (Baker's yeast).